The primary structure comprises 102 residues: Large ribosomal subunit protein bL21 (102 aa).

It belongs to the bacterial ribosomal protein bL21 family. In terms of assembly, part of the 50S ribosomal subunit. Contacts protein L20.

Its function is as follows. This protein binds to 23S rRNA in the presence of protein L20. This chain is Large ribosomal subunit protein bL21, found in Geobacter metallireducens (strain ATCC 53774 / DSM 7210 / GS-15).